Consider the following 164-residue polypeptide: NADPH-dependent 7-cyano-7-deazaguanine reductase (164 aa).

Cys55 (thioimide intermediate) is an active-site residue. Asp62 functions as the Proton donor in the catalytic mechanism. Residues Val77–Ser79 and His96–Glu97 each bind substrate.

Belongs to the GTP cyclohydrolase I family. QueF type 1 subfamily.

Its subcellular location is the cytoplasm. The catalysed reaction is 7-aminomethyl-7-carbaguanine + 2 NADP(+) = 7-cyano-7-deazaguanine + 2 NADPH + 3 H(+). It functions in the pathway tRNA modification; tRNA-queuosine biosynthesis. Functionally, catalyzes the NADPH-dependent reduction of 7-cyano-7-deazaguanine (preQ0) to 7-aminomethyl-7-deazaguanine (preQ1). The polypeptide is NADPH-dependent 7-cyano-7-deazaguanine reductase (Bacillus velezensis (strain DSM 23117 / BGSC 10A6 / LMG 26770 / FZB42) (Bacillus amyloliquefaciens subsp. plantarum)).